We begin with the raw amino-acid sequence, 133 residues long: ATP synthase epsilon chain, sodium ion specific (133 aa).

The protein belongs to the ATPase epsilon chain family. As to quaternary structure, F-type ATPases have 2 components, CF(1) - the catalytic core - and CF(0) - the membrane proton channel. CF(1) has five subunits: alpha(3), beta(3), gamma(1), delta(1), epsilon(1). CF(0) has three main subunits: a, b and c.

The protein resides in the cell membrane. With respect to regulation, inhibited by nitrate. In terms of biological role, produces ATP from ADP in the presence of a sodium gradient across the membrane. This chain is ATP synthase epsilon chain, sodium ion specific (atpC), found in Acetobacterium woodii (strain ATCC 29683 / DSM 1030 / JCM 2381 / KCTC 1655 / WB1).